We begin with the raw amino-acid sequence, 75 residues long: Putative defensin-like protein 126 (75 aa).

Positions 1 to 24 are cleaved as a signal peptide; the sequence is MSKSTFLFVYIILILGSMVNEIQG. 4 cysteine pairs are disulfide-bonded: Cys29/Cys73, Cys38/Cys57, Cys43/Cys67, and Cys47/Cys69.

This sequence belongs to the DEFL family.

The protein resides in the secreted. The protein is Putative defensin-like protein 126 (LCR6) of Arabidopsis thaliana (Mouse-ear cress).